The primary structure comprises 384 residues: MPQLDSGGGGAGGGDDLGAPDELLAFQDEGEEQDDKSRDSAAGPERDLAELKSSLVNESEGAAGGAGIPGVPGAGAGARGEAEALGREHAAQRLFPDKLPEPLEDGLKAPECTSGMYKETVYSAFNLLMHYPPPSGAGQHPQPQPPLHKANQPPHGVPQLSLYEHFNSPHPTPAPADISQKQVHRPLQTPDLSGFYSLTSGSMGQLPHTVSWFTHPSLMLGSGVPGHPAAIPHPAIVPPSGKQELQPFDRNLKTQAESKAEKEAKKPTIKKPLNAFMLYMKEMRAKVIAECTLKESAAINQILGRRWHALSREEQAKYYELARKERQLHMQLYPGWSARDNYGKKKRRSREKHQESTTGGKRNAFGTYPEKAAAPAPFLPMTVL.

Over residues 1–16 the composition is skewed to gly residues; that stretch reads MPQLDSGGGGAGGGDD. Residues 1 to 59 form a CTNNB1-binding region; sequence MPQLDSGGGGAGGGDDLGAPDELLAFQDEGEEQDDKSRDSAAGPERDLAELKSSLVNES. 3 disordered regions span residues 1 to 88, 133 to 183, and 337 to 384; these read MPQL…LGRE, PPSG…QKQV, and SARD…MTVL. Residues 35-50 are compositionally biased toward basic and acidic residues; that stretch reads DKSRDSAAGPERDLAE. The span at 62–78 shows a compositional bias: gly residues; the sequence is AAGGAGIPGVPGAGAGA. Residues 269-337 constitute a DNA-binding region (HMG box); it reads IKKPLNAFML…LHMQLYPGWS (69 aa). Positions 344-348 match the Nuclear localization signal motif; it reads KKKRR. A compositionally biased stretch (basic and acidic residues) spans 352–370; that stretch reads KHQESTTGGKRNAFGTYPE. Residues 374 to 384 are compositionally biased toward low complexity; that stretch reads APAPFLPMTVL.

Belongs to the TCF/LEF family. Binds the armadillo repeat of CTNNB1 and forms a stable complex. Interacts with TLE5, TLE1, TLE2, TLE3 and TLE4. Interacts with MLLT11. Long isoform interacts (via N-terminus) with SOX13; inhibits WNT-mediated transcriptional activity. Interacts with DAZAP2. In terms of tissue distribution, predominantly expressed in T-cells. Also detected in proliferating intestinal epithelial cells and in the basal epithelial cells of mammary gland epithelium.

Its subcellular location is the nucleus. Transcriptional activator involved in T-cell lymphocyte differentiation. Necessary for the survival of CD4(+) CD8(+) immature thymocytes. Isoforms lacking the N-terminal CTNNB1 binding domain cannot fulfill this role. Binds to the T-lymphocyte-specific enhancer element (5'-WWCAAAG-3') found in the promoter of the CD3E gene. Represses expression of the T-cell receptor gamma gene in alpha-beta T-cell lineages. Required for the development of natural killer receptor-positive lymphoid tissue inducer T-cells. TLE1, TLE2, TLE3 and TLE4 repress transactivation mediated by TCF7 and CTNNB1. May also act as feedback transcriptional repressor of CTNNB1 and TCF7L2 target genes. The sequence is that of Transcription factor 7 from Homo sapiens (Human).